The sequence spans 424 residues: Probable methyltransferase EP424R (424 aa).

One can recognise an Adrift-type SAM-dependent 2'-O-MTase domain in the interval 103–315 (QIVTNAWLKM…TYIVGKNRLR (213 aa)). G135 and D228 together coordinate S-adenosyl-L-methionine. K268 acts as the Proton acceptor in catalysis.

Its subcellular location is the virion. The chain is Probable methyltransferase EP424R from Ornithodoros (relapsing fever ticks).